Consider the following 307-residue polypeptide: Cytochrome c1 1, heme protein, mitochondrial (307 aa).

The N-terminal 64 residues, 1-64 (MVGGGVIQQI…LLSFSTVASA (64 aa)), are a transit peptide targeting the mitochondrion. The Mitochondrial intermembrane portion of the chain corresponds to 65–270 (DEAEHGLESP…EPEMEERKLM (206 aa)). One can recognise a Cytochrome c domain in the interval 90-246 (ASIRRGHQVY…YEDGVPATEA (157 aa)). Residues cysteine 103, cysteine 106, histidine 107, and methionine 226 each contribute to the heme c site. Residues 271–288 (GFKWIFLLSLALLQAAYY) form a helical membrane-spanning segment. Topologically, residues 289–307 (RRLKWSVLKSRKLVLDVVN) are mitochondrial matrix.

The protein belongs to the cytochrome c family. Component of the ubiquinol-cytochrome c oxidoreductase (cytochrome b-c1 complex, complex III, CIII), a multisubunit enzyme composed of 10 subunits. The complex is composed of 3 respiratory subunits cytochrome b (MT-CYB), cytochrome c1 (CYC1-1 or CYC1-2) and Rieske protein (UCR1-1 or UCR1-2), 2 core protein subunits MPPalpha1 (or MPPalpha2) and MPPB, and 5 low-molecular weight protein subunits QCR7-1 (or QCR7-2), UCRQ-1 (or UCRQ-2), QCR9, UCRY and probably QCR6-1 (or QCR6-2). The complex exists as an obligatory dimer and forms supercomplexes (SCs) in the inner mitochondrial membrane with NADH-ubiquinone oxidoreductase (complex I, CI), resulting in different assemblies (supercomplexes SCI(1)III(2) and SCI(2)III(4)). Binds 1 heme c group covalently per subunit.

It is found in the mitochondrion inner membrane. Its function is as follows. Component of the ubiquinol-cytochrome c oxidoreductase, a multisubunit transmembrane complex that is part of the mitochondrial electron transport chain which drives oxidative phosphorylation. The respiratory chain contains 3 multisubunit complexes succinate dehydrogenase (complex II, CII), ubiquinol-cytochrome c oxidoreductase (cytochrome b-c1 complex, complex III, CIII) and cytochrome c oxidase (complex IV, CIV), that cooperate to transfer electrons derived from NADH and succinate to molecular oxygen, creating an electrochemical gradient over the inner membrane that drives transmembrane transport and the ATP synthase. The cytochrome b-c1 complex catalyzes electron transfer from ubiquinol to cytochrome c, linking this redox reaction to translocation of protons across the mitochondrial inner membrane, with protons being carried across the membrane as hydrogens on the quinol. In the process called Q cycle, 2 protons are consumed from the matrix, 4 protons are released into the intermembrane space and 2 electrons are passed to cytochrome c. Cytochrome c1 is a catalytic core subunit containing a c-type heme. It transfers electrons from the [2Fe-2S] iron-sulfur cluster of the Rieske protein to cytochrome c. This is Cytochrome c1 1, heme protein, mitochondrial (CYC1-1) from Arabidopsis thaliana (Mouse-ear cress).